The primary structure comprises 135 residues: Small ribosomal subunit protein uS12 (135 aa).

The segment at 1-20 is disordered; sequence MPTINQLVRKGRHSKVTKSK. A compositionally biased stretch (basic residues) spans 9 to 18; the sequence is RKGRHSKVTK.

The protein belongs to the universal ribosomal protein uS12 family. In terms of assembly, part of the 30S ribosomal subunit. Contacts proteins S8 and S17. May interact with IF1 in the 30S initiation complex.

Its function is as follows. With S4 and S5 plays an important role in translational accuracy. Interacts with and stabilizes bases of the 16S rRNA that are involved in tRNA selection in the A site and with the mRNA backbone. Located at the interface of the 30S and 50S subunits, it traverses the body of the 30S subunit contacting proteins on the other side and probably holding the rRNA structure together. The combined cluster of proteins S8, S12 and S17 appears to hold together the shoulder and platform of the 30S subunit. In Lactobacillus acidophilus (strain ATCC 700396 / NCK56 / N2 / NCFM), this protein is Small ribosomal subunit protein uS12.